A 523-amino-acid polypeptide reads, in one-letter code: BTB/POZ domain-containing protein 3 (523 aa).

The stretch at 85–114 (FDYSPLVLASLCGHEPVVKFLLENGALCER) is one ANK repeat. BTB domains lie at 167–223 (TDIV…RYLY) and 306–373 (HDAY…DIAP).

As to quaternary structure, interacts with cul3. Ubiquitinated and targeted for cul3-dependent degradation.

The protein resides in the cytoplasm. It functions in the pathway protein modification; protein ubiquitination. Probable substrate-specific adapter of an E3 ubiquitin-protein ligase complex which mediates the ubiquitination and subsequent proteasomal degradation of target proteins. The chain is BTB/POZ domain-containing protein 3 (btb3) from Schizosaccharomyces pombe (strain 972 / ATCC 24843) (Fission yeast).